The sequence spans 493 residues: Monocarboxylate transporter 1 (493 aa).

Topologically, residues 1–22 are cytoplasmic; that stretch reads MPPAIGGPVGYTPPDGGWGWAV. Residues 23 to 44 traverse the membrane as a helical segment; it reads LVGAFISIGFSYAFPKSITVFF. Residue Lys38 participates in (S)-lactate binding. The Extracellular segment spans residues 45-55; the sequence is KEIEVIFSATT. Residues 56–80 form a helical membrane-spanning segment; it reads SEVSWISSIMLAVMYAGGPISSILV. The Cytoplasmic segment spans residues 81 to 84; sequence NKYG. Residues 85–105 traverse the membrane as a helical segment; that stretch reads SRPVMIAGGCLSGCGLIAASF. Residues 106–109 lie on the Extracellular side of the membrane; it reads CNTV. Residues 110 to 132 form a helical membrane-spanning segment; it reads QELYLCIGVIGGLGLAFNLNPAL. Residues 133–146 are Cytoplasmic-facing; sequence TMIGKYFYKKRPLA. Residues 147–169 form a helical membrane-spanning segment; that stretch reads NGLAMAGSPVFLSTLAPLNQAFF. Topologically, residues 170–174 are extracellular; sequence DIFDW. A helical membrane pass occupies residues 175 to 194; that stretch reads RGSFLILGGLLLNCCVAGSL. The Cytoplasmic portion of the chain corresponds to 195–254; the sequence is MRPIGPEQVKLEKLKSKESLQEAGKSDANTDLIGGSPKGEKLSVFQTINKFLDLSLFTHR. Phosphoserine is present on residues Ser210, Ser213, and Ser220. Thr224 carries the phosphothreonine modification. Ser230 carries the phosphoserine modification. Residues 255 to 281 traverse the membrane as a helical segment; the sequence is GFLLYLSGNVVMFFGLFTPLVFLSSYG. The Extracellular segment spans residues 282–288; the sequence is KSKDFSS. A helical transmembrane segment spans residues 289–310; it reads EKSAFLLSILAFVDMVARPSMG. Position 302 (Asp302) interacts with H(+). Arg306 is a binding site for (S)-lactate. Residues 311–321 are Cytoplasmic-facing; that stretch reads LAANTKWIRPR. The helical transmembrane segment at 322 to 342 threads the bilayer; it reads IQYFFAASVVANGVCHLLAPL. At 343-346 the chain is on the extracellular side; sequence STTY. Residues 347–368 traverse the membrane as a helical segment; that stretch reads VGFCVYAGVFGFAFGWLSSVLF. Residues 369 to 382 lie on the Cytoplasmic side of the membrane; sequence ETLMDLIGPQRFSS. A helical membrane pass occupies residues 383–403; sequence AVGLVTIVECCPVLLGPPLLG. At 404 to 414 the chain is on the extracellular side; it reads RLNDMYGDYKY. A helical transmembrane segment spans residues 415–436; the sequence is TYWACGVILIIAGIYLFIGMGI. The Cytoplasmic portion of the chain corresponds to 437–493; the sequence is NYRLLAKEQKAEEKQKREGKEDEASTDVDEKPKETMKAAQSPQQHSSGDPTEEESPV. Residues 447 to 472 show a composition bias toward basic and acidic residues; that stretch reads AEEKQKREGKEDEASTDVDEKPKETM. A disordered region spans residues 447–493; that stretch reads AEEKQKREGKEDEASTDVDEKPKETMKAAQSPQQHSSGDPTEEESPV. Ser461 bears the Phosphoserine mark. Thr462 carries the post-translational modification Phosphothreonine. Over residues 474 to 485 the composition is skewed to polar residues; it reads AAQSPQQHSSGD. Ser477, Ser482, Ser483, and Ser491 each carry phosphoserine.

This sequence belongs to the major facilitator superfamily. Monocarboxylate porter (TC 2.A.1.13) family. Interacts with isoform 2 of BSG; interaction mediates SLC16A1 targeting to the plasma membrane. Interacts with EMB; interaction mediates SLC16A1 targeting to the plasma membrane. As to expression, detected in liver, brain, spinal cord, spermatozoa, muscle, white adipose tissue and brown adipose tissue (at protein level). Widely expressed, except in pancreas, where expression is not detectable.

It localises to the cell membrane. It is found in the basolateral cell membrane. The protein localises to the apical cell membrane. The enzyme catalyses (S)-lactate(in) + H(+)(in) = (S)-lactate(out) + H(+)(out). It carries out the reaction acetate(out) + H(+)(out) = acetate(in) + H(+)(in). It catalyses the reaction acetoacetate(out) + H(+)(out) = acetoacetate(in) + H(+)(in). The catalysed reaction is pyruvate(out) + H(+)(out) = pyruvate(in) + H(+)(in). The enzyme catalyses (R)-3-hydroxybutanoate(out) + H(+)(out) = (R)-3-hydroxybutanoate(in) + H(+)(in). It carries out the reaction 3-methyl-2-oxobutanoate(out) + H(+)(out) = 3-methyl-2-oxobutanoate(in) + H(+)(in). It catalyses the reaction 4-methyl-2-oxopentanoate(out) + H(+)(out) = 4-methyl-2-oxopentanoate(in) + H(+)(in). The catalysed reaction is succinate(in) + 2 H(+)(in) = succinate(out) + 2 H(+)(out). In terms of biological role, bidirectional proton-coupled monocarboxylate transporter. Catalyzes the rapid transport across the plasma membrane of many monocarboxylates such as lactate, pyruvate, acetate and the ketone bodies acetoacetate and beta-hydroxybutyrate, and thus contributes to the maintenance of intracellular pH. The transport direction is determined by the proton motive force and the concentration gradient of the substrate monocarboxylate. MCT1 is a major lactate exporter. Plays a role in cellular responses to a high-fat diet by modulating the cellular levels of lactate and pyruvate that contribute to the regulation of central metabolic pathways and insulin secretion, with concomitant effects on plasma insulin levels and blood glucose homeostasis. Facilitates the protonated monocarboxylate form of succinate export, that its transient protonation upon muscle cell acidification in exercising muscle and ischemic heart. Functions via alternate outward- and inward-open conformation states. Protonation and deprotonation of 302-Asp is essential for the conformational transition. The polypeptide is Monocarboxylate transporter 1 (Slc16a1) (Mus musculus (Mouse)).